The primary structure comprises 327 residues: Beta-ketoacyl-[acyl-carrier-protein] synthase III 2 (327 aa).

Active-site residues include Cys114 and His251. The ACP-binding stretch occupies residues 252 to 256; it reads SANLR. Residue Asn281 is part of the active site.

Belongs to the thiolase-like superfamily. FabH family. In terms of assembly, homodimer.

The protein localises to the cytoplasm. The catalysed reaction is malonyl-[ACP] + acetyl-CoA + H(+) = 3-oxobutanoyl-[ACP] + CO2 + CoA. It functions in the pathway lipid metabolism; fatty acid biosynthesis. Its function is as follows. Catalyzes the condensation reaction of fatty acid synthesis by the addition to an acyl acceptor of two carbons from malonyl-ACP. Catalyzes the first condensation reaction which initiates fatty acid synthesis and may therefore play a role in governing the total rate of fatty acid production. Possesses both acetoacetyl-ACP synthase and acetyl transacylase activities. Its substrate specificity determines the biosynthesis of branched-chain and/or straight-chain of fatty acids. The sequence is that of Beta-ketoacyl-[acyl-carrier-protein] synthase III 2 from Bacillus cereus (strain ATCC 14579 / DSM 31 / CCUG 7414 / JCM 2152 / NBRC 15305 / NCIMB 9373 / NCTC 2599 / NRRL B-3711).